Reading from the N-terminus, the 386-residue chain is 8-amino-7-oxononanoate synthase (386 aa).

Residues Arg22 and Arg29 each contribute to the substrate site. Pyridoxal 5'-phosphate is bound at residue 109–110; the sequence is GY. Residue His134 coordinates substrate. Pyridoxal 5'-phosphate contacts are provided by residues Ser182, 207-210, and 237-240; these read DDAH and TLSK. Lys240 carries the N6-(pyridoxal phosphate)lysine modification. Thr349 provides a ligand contact to substrate.

This sequence belongs to the class-II pyridoxal-phosphate-dependent aminotransferase family. BioF subfamily. As to quaternary structure, homodimer. It depends on pyridoxal 5'-phosphate as a cofactor.

It catalyses the reaction 6-carboxyhexanoyl-[ACP] + L-alanine + H(+) = (8S)-8-amino-7-oxononanoate + holo-[ACP] + CO2. It functions in the pathway cofactor biosynthesis; biotin biosynthesis. Its function is as follows. Catalyzes the decarboxylative condensation of pimeloyl-[acyl-carrier protein] and L-alanine to produce 8-amino-7-oxononanoate (AON), [acyl-carrier protein], and carbon dioxide. The sequence is that of 8-amino-7-oxononanoate synthase from Beijerinckia indica subsp. indica (strain ATCC 9039 / DSM 1715 / NCIMB 8712).